Reading from the N-terminus, the 546-residue chain is Glutamate--tRNA ligase (546 aa).

The 'HIGH' region signature appears at 42 to 52 (PSPTGFIHLGN). Residues 293 to 297 (KLSKR) carry the 'KMSKS' region motif. K296 provides a ligand contact to ATP.

This sequence belongs to the class-I aminoacyl-tRNA synthetase family. Glutamate--tRNA ligase type 1 subfamily. In terms of assembly, monomer.

The protein localises to the cytoplasm. It carries out the reaction tRNA(Glu) + L-glutamate + ATP = L-glutamyl-tRNA(Glu) + AMP + diphosphate. Functionally, catalyzes the attachment of glutamate to tRNA(Glu) in a two-step reaction: glutamate is first activated by ATP to form Glu-AMP and then transferred to the acceptor end of tRNA(Glu). This Acetivibrio thermocellus (strain ATCC 27405 / DSM 1237 / JCM 9322 / NBRC 103400 / NCIMB 10682 / NRRL B-4536 / VPI 7372) (Clostridium thermocellum) protein is Glutamate--tRNA ligase.